The primary structure comprises 144 residues: UPF0225 protein RSc0270 (144 aa).

Belongs to the UPF0225 family.

This chain is UPF0225 protein RSc0270, found in Ralstonia nicotianae (strain ATCC BAA-1114 / GMI1000) (Ralstonia solanacearum).